Here is a 422-residue protein sequence, read N- to C-terminus: Elongation factor 1-alpha (422 aa).

One can recognise a tr-type G domain in the interval 5–221 (KPHMNLAVIG…DELKEPEKPS (217 aa)). The G1 stretch occupies residues 14–21 (GHIDHGKS). 14-21 (GHIDHGKS) serves as a coordination point for GTP. Residue Ser-21 coordinates Mg(2+). Residues 70–74 (GITID) form a G2 region. The tract at residues 91 to 94 (DCPG) is G3. GTP-binding positions include 91 to 95 (DCPGH) and 146 to 149 (NKMD). The tract at residues 146 to 149 (NKMD) is G4. Residues 185–187 (SAF) form a G5 region.

It belongs to the TRAFAC class translation factor GTPase superfamily. Classic translation factor GTPase family. EF-Tu/EF-1A subfamily.

It is found in the cytoplasm. It carries out the reaction GTP + H2O = GDP + phosphate + H(+). Its function is as follows. GTP hydrolase that promotes the GTP-dependent binding of aminoacyl-tRNA to the A-site of ribosomes during protein biosynthesis. This chain is Elongation factor 1-alpha, found in Methanosarcina acetivorans (strain ATCC 35395 / DSM 2834 / JCM 12185 / C2A).